Here is a 329-residue protein sequence, read N- to C-terminus: Gut-specific cysteine proteinase (329 aa).

An N-terminal signal peptide occupies residues 1–15 (MKFLILTALCAVTLA). The propeptide at 16–84 (FVPINHQSAV…ATEQEVVLAS (69 aa)) is activation peptide. Disulfide bonds link cysteine 98/cysteine 127, cysteine 110/cysteine 155, cysteine 146/cysteine 204, cysteine 147/cysteine 151, cysteine 183/cysteine 208, and cysteine 191/cysteine 196. Residue cysteine 113 is part of the active site. Catalysis depends on residues histidine 275 and asparagine 295.

Belongs to the peptidase C1 family. As to expression, larvae exhibit strong expression in gut cells and weak expression in hypodermal cells. Adults exhibit the reverse: strong expression in hypodermal cells and weaker expression in gut cells.

Functionally, thiol protease. Has a role as a digestive enzyme. This Caenorhabditis elegans protein is Gut-specific cysteine proteinase (cpr-1).